The chain runs to 177 residues: Large ribosomal subunit protein uL10 (177 aa).

This sequence belongs to the universal ribosomal protein uL10 family. As to quaternary structure, part of the ribosomal stalk of the 50S ribosomal subunit. The N-terminus interacts with L11 and the large rRNA to form the base of the stalk. The C-terminus forms an elongated spine to which L12 dimers bind in a sequential fashion forming a multimeric L10(L12)X complex.

Forms part of the ribosomal stalk, playing a central role in the interaction of the ribosome with GTP-bound translation factors. This chain is Large ribosomal subunit protein uL10, found in Mycobacterium leprae (strain Br4923).